The following is a 179-amino-acid chain: ATP synthase subunit delta (179 aa).

The protein belongs to the ATPase delta chain family. F-type ATPases have 2 components, F(1) - the catalytic core - and F(0) - the membrane proton channel. F(1) has five subunits: alpha(3), beta(3), gamma(1), delta(1), epsilon(1). F(0) has three main subunits: a(1), b(2) and c(10-14). The alpha and beta chains form an alternating ring which encloses part of the gamma chain. F(1) is attached to F(0) by a central stalk formed by the gamma and epsilon chains, while a peripheral stalk is formed by the delta and b chains.

It is found in the cell membrane. F(1)F(0) ATP synthase produces ATP from ADP in the presence of a proton or sodium gradient. F-type ATPases consist of two structural domains, F(1) containing the extramembraneous catalytic core and F(0) containing the membrane proton channel, linked together by a central stalk and a peripheral stalk. During catalysis, ATP synthesis in the catalytic domain of F(1) is coupled via a rotary mechanism of the central stalk subunits to proton translocation. In terms of biological role, this protein is part of the stalk that links CF(0) to CF(1). It either transmits conformational changes from CF(0) to CF(1) or is implicated in proton conduction. The protein is ATP synthase subunit delta of Clostridium botulinum (strain Kyoto / Type A2).